The following is a 236-amino-acid chain: 7-cyano-7-deazaguanine synthase (236 aa).

7–17 (CSGGLDSVSLA) lines the ATP pocket. Zn(2+) contacts are provided by Cys-185, Cys-193, Cys-196, and Cys-199.

Belongs to the QueC family. Requires Zn(2+) as cofactor.

It catalyses the reaction 7-carboxy-7-deazaguanine + NH4(+) + ATP = 7-cyano-7-deazaguanine + ADP + phosphate + H2O + H(+). Its pathway is purine metabolism; 7-cyano-7-deazaguanine biosynthesis. Catalyzes the ATP-dependent conversion of 7-carboxy-7-deazaguanine (CDG) to 7-cyano-7-deazaguanine (preQ(0)). The protein is 7-cyano-7-deazaguanine synthase of Rhizobium rhizogenes (strain K84 / ATCC BAA-868) (Agrobacterium radiobacter).